The sequence spans 102 residues: Small ribosomal subunit protein uS10 (102 aa).

The protein belongs to the universal ribosomal protein uS10 family. Part of the 30S ribosomal subunit.

Its function is as follows. Involved in the binding of tRNA to the ribosomes. This chain is Small ribosomal subunit protein uS10, found in Caldanaerobacter subterraneus subsp. tengcongensis (strain DSM 15242 / JCM 11007 / NBRC 100824 / MB4) (Thermoanaerobacter tengcongensis).